A 237-amino-acid chain; its full sequence is tRNA (guanine-N(1)-)-methyltransferase (237 aa).

S-adenosyl-L-methionine-binding positions include G112 and 132-137; that span reads IGDFVL.

The protein belongs to the RNA methyltransferase TrmD family. Homodimer.

Its subcellular location is the cytoplasm. The enzyme catalyses guanosine(37) in tRNA + S-adenosyl-L-methionine = N(1)-methylguanosine(37) in tRNA + S-adenosyl-L-homocysteine + H(+). In terms of biological role, specifically methylates guanosine-37 in various tRNAs. The chain is tRNA (guanine-N(1)-)-methyltransferase from Thermosynechococcus vestitus (strain NIES-2133 / IAM M-273 / BP-1).